A 96-amino-acid polypeptide reads, in one-letter code: Co-chaperonin GroES (96 aa).

This sequence belongs to the GroES chaperonin family. In terms of assembly, heptamer of 7 subunits arranged in a ring. Interacts with the chaperonin GroEL.

It is found in the cytoplasm. Together with the chaperonin GroEL, plays an essential role in assisting protein folding. The GroEL-GroES system forms a nano-cage that allows encapsulation of the non-native substrate proteins and provides a physical environment optimized to promote and accelerate protein folding. GroES binds to the apical surface of the GroEL ring, thereby capping the opening of the GroEL channel. The polypeptide is Co-chaperonin GroES (Paracidovorax citrulli (strain AAC00-1) (Acidovorax citrulli)).